Here is a 906-residue protein sequence, read N- to C-terminus: Eukaryotic translation initiation factor 3 subunit C (906 aa).

Residues Met1–Ala22 are disordered. The segment covering Ser11–Val20 has biased composition (acidic residues). Ser34, Ser165, Ser176, and Ser185 each carry phosphoserine. Positions Arg158 to Glu283 are disordered. A compositionally biased stretch (acidic residues) spans Asp162–Asp186. Low complexity predominate over residues Glu195–Ala209. Residues Ala211–Asn237 are compositionally biased toward acidic residues. A compositionally biased stretch (basic and acidic residues) spans Met242–Ile270. A PCI domain is found at Phe641–Pro817. 2 disordered regions span residues Gly853–Gly873 and Gln887–Glu906. The span at Gln894 to Glu906 shows a compositional bias: low complexity.

Belongs to the eIF-3 subunit C family. In terms of assembly, component of the eukaryotic translation initiation factor 3 (eIF-3) complex. The eIF-3 complex interacts with pix.

It localises to the cytoplasm. Its function is as follows. Component of the eukaryotic translation initiation factor 3 (eIF-3) complex, which is involved in protein synthesis of a specialized repertoire of mRNAs and, together with other initiation factors, stimulates binding of mRNA and methionyl-tRNAi to the 40S ribosome. The eIF-3 complex specifically targets and initiates translation of a subset of mRNAs involved in cell proliferation. The polypeptide is Eukaryotic translation initiation factor 3 subunit C (Drosophila ananassae (Fruit fly)).